We begin with the raw amino-acid sequence, 389 residues long: MSVTATSHDILKSIDDSILPPEDTLSEAMYNNVKLDHYFNKLPKSSEENNINDQTNQLIVSAAPESEDSPAAEWKLLRTLAGAHQGWIRAIALDEITNKWYVTGSADSTIKIWDFENNSLKAVLTGHVLGIRSLCISKRHPYLFSGGEDKSLRCWDLERSNSDAGCQIRSYHGHLGGVYSIGLHPELDVLFSGGKDCVVRVWDIRSRVEAMTLLGHTNDITSIETDYNDPQVITSSMDGTIRLWDLRKSKTELLITNHSKSIRSMKSHPKEATFVSGDSNGEIKQWLLPKGELLNEFGTSQLSPNQRDNSRIINTLAINPVTNTLFSGYDDGKLEFYNYTTGNLQQSGQSPSLAGPEQSAIYASTFDMSGLRLLTCHGDKSIRIWGTSY.

7 WD repeats span residues 83–123 (AHQG…LKAV), 126–165 (GHVL…SDAG), 173–212 (GHLG…EAMT), 215–254 (GHTN…TELL), 257–298 (NHSK…NEFG), 308–347 (DNSR…LQQS), and 356–389 (PEQS…GTSY).

It belongs to the WD repeat PRL1/PRL2 family. As to quaternary structure, associated with the spliceosome.

The protein localises to the cytoplasm. It localises to the nucleus. Functionally, involved in pre-mRNA splicing and required for cell cycle progression at G2/M. This Candida albicans (strain SC5314 / ATCC MYA-2876) (Yeast) protein is Pre-mRNA-splicing factor PRP46 (PRP46).